Reading from the N-terminus, the 802-residue chain is Copper-exporting P-type ATPase (802 aa).

HMA domains lie at 5–71 (KEIA…YHVV) and 73–139 (EKAE…YKLK). C16, C19, C84, and C87 together coordinate Cu(+). Helical transmembrane passes span 162 to 181 (LIFS…SHFT), 196 to 218 (WMQF…VGAY), 230 to 249 (VLVA…LTFQ), 259 to 278 (GLYY…GKLF), 412 to 434 (ISGI…WYLW), and 447 to 469 (FIAV…SIMA). D499 (4-aspartylphosphate intermediate) is an active-site residue. Mg(2+)-binding residues include D698 and D702. Transmembrane regions (helical) follow at residues 756 to 775 (LFWA…LGFL) and 779 to 796 (IAGA…LNAL).

The protein belongs to the cation transport ATPase (P-type) (TC 3.A.3) family. Type IB subfamily. As to quaternary structure, monomer at sub-stoichiometric copper concentrations. Homodimer at higher copper concentrations. Forms a heterodimer (electrostatic interactions) with CopZ during the transfer of Cu(+).

Its subcellular location is the cell membrane. The catalysed reaction is Cu(+)(in) + ATP + H2O = Cu(+)(out) + ADP + phosphate + H(+). In terms of biological role, involved in copper export. This Bacillus subtilis (strain 168) protein is Copper-exporting P-type ATPase (copA).